The sequence spans 183 residues: Gene BABR protein 2 (183 aa).

The chain is Gene BABR protein 2 from Babesia bovis.